Here is a 222-residue protein sequence, read N- to C-terminus: Deoxyribose-phosphate aldolase (222 aa).

Residue aspartate 94 is the Proton donor/acceptor of the active site. Lysine 156 functions as the Schiff-base intermediate with acetaldehyde in the catalytic mechanism. The Proton donor/acceptor role is filled by lysine 185.

The protein belongs to the DeoC/FbaB aldolase family. DeoC type 1 subfamily.

The protein localises to the cytoplasm. It carries out the reaction 2-deoxy-D-ribose 5-phosphate = D-glyceraldehyde 3-phosphate + acetaldehyde. It participates in carbohydrate degradation; 2-deoxy-D-ribose 1-phosphate degradation; D-glyceraldehyde 3-phosphate and acetaldehyde from 2-deoxy-alpha-D-ribose 1-phosphate: step 2/2. Its function is as follows. Catalyzes a reversible aldol reaction between acetaldehyde and D-glyceraldehyde 3-phosphate to generate 2-deoxy-D-ribose 5-phosphate. This is Deoxyribose-phosphate aldolase from Malacoplasma penetrans (strain HF-2) (Mycoplasma penetrans).